Consider the following 545-residue polypeptide: Chaperonin GroEL (545 aa).

ATP contacts are provided by residues 30–33 (TLGP), lysine 51, 87–91 (DGTTT), glycine 415, 479–481 (NAA), and aspartate 495.

Belongs to the chaperonin (HSP60) family. In terms of assembly, forms a cylinder of 14 subunits composed of two heptameric rings stacked back-to-back. Interacts with the co-chaperonin GroES.

The protein resides in the cytoplasm. It carries out the reaction ATP + H2O + a folded polypeptide = ADP + phosphate + an unfolded polypeptide.. Functionally, together with its co-chaperonin GroES, plays an essential role in assisting protein folding. The GroEL-GroES system forms a nano-cage that allows encapsulation of the non-native substrate proteins and provides a physical environment optimized to promote and accelerate protein folding. This is Chaperonin GroEL from Tolumonas auensis (strain DSM 9187 / NBRC 110442 / TA 4).